Consider the following 180-residue polypeptide: Bifunctional protein PyrR (180 aa).

Positions 99-111 (VILVDDVLYTCRT) match the PRPP-binding motif.

This sequence belongs to the purine/pyrimidine phosphoribosyltransferase family. PyrR subfamily. As to quaternary structure, homodimer and homohexamer; in equilibrium.

It catalyses the reaction UMP + diphosphate = 5-phospho-alpha-D-ribose 1-diphosphate + uracil. Functionally, regulates transcriptional attenuation of the pyrimidine nucleotide (pyr) operon by binding in a uridine-dependent manner to specific sites on pyr mRNA. This disrupts an antiterminator hairpin in the RNA and favors formation of a downstream transcription terminator, leading to a reduced expression of downstream genes. Its function is as follows. Also displays a weak uracil phosphoribosyltransferase activity which is not physiologically significant. In Clostridium botulinum (strain Eklund 17B / Type B), this protein is Bifunctional protein PyrR.